The primary structure comprises 367 residues: Queuine tRNA-ribosyltransferase (367 aa).

The Proton acceptor role is filled by Asp89. Substrate contacts are provided by residues 89-93, Asp143, Gln187, and Gly214; that span reads DSGGF. Residues 245–251 are RNA binding; sequence GVGTPAD. The active-site Nucleophile is Asp264. The tract at residues 269–273 is RNA binding; important for wobble base 34 recognition; that stretch reads TRNAR. The Zn(2+) site is built by Cys302, Cys304, Cys307, and His333.

It belongs to the queuine tRNA-ribosyltransferase family. In terms of assembly, homodimer. Within each dimer, one monomer is responsible for RNA recognition and catalysis, while the other monomer binds to the replacement base PreQ1. It depends on Zn(2+) as a cofactor.

It catalyses the reaction 7-aminomethyl-7-carbaguanine + guanosine(34) in tRNA = 7-aminomethyl-7-carbaguanosine(34) in tRNA + guanine. The protein operates within tRNA modification; tRNA-queuosine biosynthesis. Functionally, catalyzes the base-exchange of a guanine (G) residue with the queuine precursor 7-aminomethyl-7-deazaguanine (PreQ1) at position 34 (anticodon wobble position) in tRNAs with GU(N) anticodons (tRNA-Asp, -Asn, -His and -Tyr). Catalysis occurs through a double-displacement mechanism. The nucleophile active site attacks the C1' of nucleotide 34 to detach the guanine base from the RNA, forming a covalent enzyme-RNA intermediate. The proton acceptor active site deprotonates the incoming PreQ1, allowing a nucleophilic attack on the C1' of the ribose to form the product. After dissociation, two additional enzymatic reactions on the tRNA convert PreQ1 to queuine (Q), resulting in the hypermodified nucleoside queuosine (7-(((4,5-cis-dihydroxy-2-cyclopenten-1-yl)amino)methyl)-7-deazaguanosine). The chain is Queuine tRNA-ribosyltransferase from Nitrosospira multiformis (strain ATCC 25196 / NCIMB 11849 / C 71).